The sequence spans 122 residues: Large ribosomal subunit protein uL14c (122 aa).

The protein belongs to the universal ribosomal protein uL14 family. In terms of assembly, part of the 50S ribosomal subunit.

The protein resides in the plastid. Its subcellular location is the chloroplast. In terms of biological role, binds to 23S rRNA. The chain is Large ribosomal subunit protein uL14c from Coffea arabica (Arabian coffee).